The chain runs to 244 residues: rRNA adenine N-6-methyltransferase (244 aa).

S-adenosyl-L-methionine contacts are provided by asparagine 11, isoleucine 13, glycine 38, glutamate 59, aspartate 84, and asparagine 101.

Belongs to the class I-like SAM-binding methyltransferase superfamily. rRNA adenine N(6)-methyltransferase family.

The enzyme catalyses adenosine(2085) in 23S rRNA + 2 S-adenosyl-L-methionine = N(6)-dimethyladenosine(2085) in 23S rRNA + 2 S-adenosyl-L-homocysteine + 2 H(+). This protein produces a dimethylation of the adenine residue at position 2085 in 23S rRNA, resulting in reduced affinity between ribosomes and macrolide-lincosamide-streptogramin B antibiotics. Is involved in erythromycin resistance. This Limosilactobacillus reuteri (Lactobacillus reuteri) protein is rRNA adenine N-6-methyltransferase (ermGT).